The primary structure comprises 352 residues: MIEPDRLISAVSGREREEQLDRAIRPLKLADYIGQPSVREQMELFIHAARGRQEALDHTLIFGPPGLGKTTLANIIAQEMGVSIKSTSGPVLERPGDLAALLTNLEAGDVLFVDEIHRLSPIVEEVLYPAMEDFQLDIMIGEGPAARSIKLDLPPFTLVGATTRAGMLTNPLRDRFGIVQRLEFYNVEDLATIVSRSAGILGLQIETQGAAEIAKRARGTPRIANRLLRRVRDFAEVRGQGDITRVIADKALNLLDVDERGFDHLDRRLLLTMIDKFDGGPVGIDNLAAALSEERHTIEDVLEPYLIQQGYIMRTPRGRVVTRHAYLHFGLNIPKRLGPGVTSDLFTSEDGN.

Residues 4-185 (PDRLISAVSG…FGIVQRLEFY (182 aa)) form a large ATPase domain (RuvB-L) region. ATP-binding positions include isoleucine 24, arginine 25, glycine 66, lysine 69, threonine 70, threonine 71, 132–134 (EDF), arginine 175, tyrosine 185, and arginine 222. Threonine 70 lines the Mg(2+) pocket. Positions 186–256 (NVEDLATIVS…IADKALNLLD (71 aa)) are small ATPAse domain (RuvB-S). The tract at residues 259-352 (ERGFDHLDRR…SDLFTSEDGN (94 aa)) is head domain (RuvB-H). Residues arginine 295, arginine 314, and arginine 319 each coordinate DNA.

Belongs to the RuvB family. Homohexamer. Forms an RuvA(8)-RuvB(12)-Holliday junction (HJ) complex. HJ DNA is sandwiched between 2 RuvA tetramers; dsDNA enters through RuvA and exits via RuvB. An RuvB hexamer assembles on each DNA strand where it exits the tetramer. Each RuvB hexamer is contacted by two RuvA subunits (via domain III) on 2 adjacent RuvB subunits; this complex drives branch migration. In the full resolvosome a probable DNA-RuvA(4)-RuvB(12)-RuvC(2) complex forms which resolves the HJ.

It is found in the cytoplasm. It catalyses the reaction ATP + H2O = ADP + phosphate + H(+). In terms of biological role, the RuvA-RuvB-RuvC complex processes Holliday junction (HJ) DNA during genetic recombination and DNA repair, while the RuvA-RuvB complex plays an important role in the rescue of blocked DNA replication forks via replication fork reversal (RFR). RuvA specifically binds to HJ cruciform DNA, conferring on it an open structure. The RuvB hexamer acts as an ATP-dependent pump, pulling dsDNA into and through the RuvAB complex. RuvB forms 2 homohexamers on either side of HJ DNA bound by 1 or 2 RuvA tetramers; 4 subunits per hexamer contact DNA at a time. Coordinated motions by a converter formed by DNA-disengaged RuvB subunits stimulates ATP hydrolysis and nucleotide exchange. Immobilization of the converter enables RuvB to convert the ATP-contained energy into a lever motion, pulling 2 nucleotides of DNA out of the RuvA tetramer per ATP hydrolyzed, thus driving DNA branch migration. The RuvB motors rotate together with the DNA substrate, which together with the progressing nucleotide cycle form the mechanistic basis for DNA recombination by continuous HJ branch migration. Branch migration allows RuvC to scan DNA until it finds its consensus sequence, where it cleaves and resolves cruciform DNA. This chain is Holliday junction branch migration complex subunit RuvB, found in Pseudomonas paraeruginosa (strain DSM 24068 / PA7) (Pseudomonas aeruginosa (strain PA7)).